A 284-amino-acid chain; its full sequence is Hypoxanthine-guanine phosphoribosyltransferase (284 aa).

GMP contacts are provided by residues lysine 129, 194-202, lysine 226, and aspartate 253; that span reads EDIIDTGKT. Aspartate 198 (proton acceptor) is an active-site residue. Aspartate 253 provides a ligand contact to Mg(2+).

It belongs to the purine/pyrimidine phosphoribosyltransferase family. Homotetramer. Requires Mg(2+) as cofactor.

Its subcellular location is the cytoplasm. It carries out the reaction IMP + diphosphate = hypoxanthine + 5-phospho-alpha-D-ribose 1-diphosphate. The enzyme catalyses GMP + diphosphate = guanine + 5-phospho-alpha-D-ribose 1-diphosphate. Its pathway is purine metabolism; IMP biosynthesis via salvage pathway; IMP from hypoxanthine: step 1/1. Functionally, converts guanine to guanosine monophosphate, and hypoxanthine to inosine monophosphate. Transfers the 5-phosphoribosyl group from 5-phosphoribosylpyrophosphate onto the purine. Plays a central role in the generation of purine nucleotides through the purine salvage pathway. This Schistosoma mansoni (Blood fluke) protein is Hypoxanthine-guanine phosphoribosyltransferase (HGPRT).